The sequence spans 241 residues: 1-(5-phosphoribosyl)-5-[(5-phosphoribosylamino)methylideneamino] imidazole-4-carboxamide isomerase (241 aa).

D8 (proton acceptor) is an active-site residue. D131 acts as the Proton donor in catalysis.

It belongs to the HisA/HisF family.

Its subcellular location is the cytoplasm. It carries out the reaction 1-(5-phospho-beta-D-ribosyl)-5-[(5-phospho-beta-D-ribosylamino)methylideneamino]imidazole-4-carboxamide = 5-[(5-phospho-1-deoxy-D-ribulos-1-ylimino)methylamino]-1-(5-phospho-beta-D-ribosyl)imidazole-4-carboxamide. Its pathway is amino-acid biosynthesis; L-histidine biosynthesis; L-histidine from 5-phospho-alpha-D-ribose 1-diphosphate: step 4/9. This is 1-(5-phosphoribosyl)-5-[(5-phosphoribosylamino)methylideneamino] imidazole-4-carboxamide isomerase from Sorangium cellulosum (strain So ce56) (Polyangium cellulosum (strain So ce56)).